Here is a 249-residue protein sequence, read N- to C-terminus: Triosephosphate isomerase (249 aa).

9–11 (NWK) contributes to the substrate binding site. Histidine 94 serves as the catalytic Electrophile. Glutamate 166 acts as the Proton acceptor in catalysis. Substrate is bound by residues glycine 172 and 232-233 (GG).

It belongs to the triosephosphate isomerase family. In terms of assembly, homodimer.

It localises to the cytoplasm. It catalyses the reaction D-glyceraldehyde 3-phosphate = dihydroxyacetone phosphate. The protein operates within carbohydrate biosynthesis; gluconeogenesis. It functions in the pathway carbohydrate degradation; glycolysis; D-glyceraldehyde 3-phosphate from glycerone phosphate: step 1/1. Functionally, involved in the gluconeogenesis. Catalyzes stereospecifically the conversion of dihydroxyacetone phosphate (DHAP) to D-glyceraldehyde-3-phosphate (G3P). This is Triosephosphate isomerase from Xylella fastidiosa (strain M12).